A 249-amino-acid chain; its full sequence is Eukaryotic translation initiation factor 3 subunit K (249 aa).

In terms of domain architecture, PCI spans 46–222 (FDCYANLALL…VKVPSNKENE (177 aa)).

Belongs to the eIF-3 subunit K family. Component of the eukaryotic translation initiation factor 3 (eIF-3) complex.

It localises to the cytoplasm. Its function is as follows. Component of the eukaryotic translation initiation factor 3 (eIF-3) complex, which is involved in protein synthesis of a specialized repertoire of mRNAs and, together with other initiation factors, stimulates binding of mRNA and methionyl-tRNAi to the 40S ribosome. The eIF-3 complex specifically targets and initiates translation of a subset of mRNAs involved in cell proliferation. This chain is Eukaryotic translation initiation factor 3 subunit K, found in Aspergillus clavatus (strain ATCC 1007 / CBS 513.65 / DSM 816 / NCTC 3887 / NRRL 1 / QM 1276 / 107).